A 168-amino-acid chain; its full sequence is Leukotoxin-activating lysine-acyltransferase LtxC (168 aa).

Active-site residues include His23 and Asp92.

Belongs to the RTX toxin acyltransferase family.

Its subcellular location is the cytoplasm. It carries out the reaction a fatty acyl-[ACP] + L-lysyl-[protein] = N(6)-(fatty acyl)-L-lysyl-[protein] + holo-[ACP] + H(+). Functionally, required for full activity and modification of the LtxA leukotoxin. Involved in fatty acid modification of the protoxin at two internal lysine residues, thereby converting it to the active toxin. This is Leukotoxin-activating lysine-acyltransferase LtxC from Aggregatibacter actinomycetemcomitans (Actinobacillus actinomycetemcomitans).